The following is a 406-amino-acid chain: Tyrosine--tRNA ligase (406 aa).

Position 35 (tyrosine 35) interacts with L-tyrosine. A 'HIGH' region motif is present at residues 40-49; it reads PTADSLHVGH. L-tyrosine contacts are provided by tyrosine 168 and glutamine 172. The 'KMSKS' region signature appears at 228-232; the sequence is KMGKT. An ATP-binding site is contributed by lysine 231. The region spanning 340 to 404 is the S4 RNA-binding domain; sequence LPILDVMAST…RGKKNYNKIE (65 aa).

This sequence belongs to the class-I aminoacyl-tRNA synthetase family. TyrS type 1 subfamily. As to quaternary structure, homodimer.

It is found in the cytoplasm. The catalysed reaction is tRNA(Tyr) + L-tyrosine + ATP = L-tyrosyl-tRNA(Tyr) + AMP + diphosphate + H(+). In terms of biological role, catalyzes the attachment of tyrosine to tRNA(Tyr) in a two-step reaction: tyrosine is first activated by ATP to form Tyr-AMP and then transferred to the acceptor end of tRNA(Tyr). In Clostridium beijerinckii (strain ATCC 51743 / NCIMB 8052) (Clostridium acetobutylicum), this protein is Tyrosine--tRNA ligase.